The sequence spans 159 residues: Transmembrane protein 92 (159 aa).

An N-terminal signal peptide occupies residues 1 to 26; it reads MSQAWVPGLAPTLLFSLLAGPQKIAA. Topologically, residues 27 to 57 are extracellular; the sequence is KCGLILACPKGFKCCGDSCCQENELFPGPVR. Residues 58–78 traverse the membrane as a helical segment; that stretch reads IFVIIFLVILSVFCICGLAKC. Residues 79 to 159 are Cytoplasmic-facing; the sequence is FCRNCREPEP…DQRGIDNPAF (81 aa). Residues 122–159 are disordered; the sequence is EVILKPSLGPTPTEPPPPYSFRPEEYTGDQRGIDNPAF.

The protein localises to the membrane. The protein is Transmembrane protein 92 (TMEM92) of Homo sapiens (Human).